We begin with the raw amino-acid sequence, 261 residues long: tRNA pseudouridine synthase A (261 aa).

Asp-52 acts as the Nucleophile in catalysis. A substrate-binding site is contributed by Tyr-110.

This sequence belongs to the tRNA pseudouridine synthase TruA family. As to quaternary structure, homodimer.

It catalyses the reaction uridine(38/39/40) in tRNA = pseudouridine(38/39/40) in tRNA. Functionally, formation of pseudouridine at positions 38, 39 and 40 in the anticodon stem and loop of transfer RNAs. This chain is tRNA pseudouridine synthase A, found in Coxiella burnetii (strain CbuK_Q154) (Coxiella burnetii (strain Q154)).